A 158-amino-acid chain; its full sequence is U-limacoditoxin(8)-Dv66 (158 aa).

The first 24 residues, 1-24 (MALRAPWIALCCVLAVLFVVPAAT), serve as a signal peptide directing secretion. A propeptide spanning residues 25-32 (RDEERQKR) is cleaved from the precursor. Tandem repeats lie at residues 33–78 (GVDF…RQKR) and 79–124 (GVDF…RQKR). The tract at residues 33 to 158 (GVDFGLQRGF…AQDPHGPGRK (126 aa)) is 3 X 46 AA tandem repeats. Proline amide is present on P63. The propeptide occupies 64–78 (GRKRRDAYEMERQKR). Residues 101 to 120 (ARAQDPHGPGRKRRDAYEME) are disordered. The residue at position 109 (P109) is a Proline amide. Residues 110-124 (GRKRRDAYEMERQKR) constitute a propeptide that is removed on maturation. A 3; half-length repeat occupies 125–158 (GVDFGLQRGFSGSELAKLKLALARAQDPHGPGRK). Proline amide is present on P155.

Belongs to the diuretic hormone class 2 family. As to expression, expressed by the venom secretory cell of the spine. The spine is a cuticular structure containing a single large nucleated venom-secreting cell at its base. It is an independent unit capable of producing, storing and injecting venom. On the back of D.vulnerans caterpillars, spines are grouped together by 50 to 100 to form scoli, of which there are eight in D.vulnerans.

It is found in the secreted. In terms of biological role, probable toxin. Does not show insecticidal, antimicrobial and antiparasitic activities. Does not induce increase in intracellular calcium in mouse DRG neurons, suggesting that it does not induce pain. The sequence is that of U-limacoditoxin(8)-Dv66 from Doratifera vulnerans (Mottled cup moth).